Reading from the N-terminus, the 45-residue chain is Mu-conotoxin-like Cal 12.1.1d (45 aa).

Cystine bridges form between Cys-3–Cys-16, Cys-11–Cys-28, Cys-18–Cys-33, and Cys-27–Cys-39. Trp-17 is modified (6'-bromotryptophan). Glu-21 is modified (4-carboxyglutamate). A 4-hydroxyproline modification is found at Pro-23. 6'-bromotryptophan is present on residues Trp-37 and Trp-38. Pro-40 carries the post-translational modification 4-hydroxyproline. Position 44 is a 6'-bromotryptophan (Trp-44).

As to expression, expressed by the venom duct.

The protein resides in the secreted. In terms of biological role, mu-conotoxins block voltage-gated sodium channels. This toxin reversibly blocks voltage-gated sodium channel in cephalopods, with no alteration in the voltage dependence of sodium conductance or on the kinetics of inactivation. This is Mu-conotoxin-like Cal 12.1.1d from Californiconus californicus (California cone).